Consider the following 161-residue polypeptide: Large ribosomal subunit protein uL10 (161 aa).

Belongs to the universal ribosomal protein uL10 family. As to quaternary structure, part of the ribosomal stalk of the 50S ribosomal subunit. The N-terminus interacts with L11 and the large rRNA to form the base of the stalk. The C-terminus forms an elongated spine to which L12 dimers bind in a sequential fashion forming a multimeric L10(L12)X complex.

Its function is as follows. Forms part of the ribosomal stalk, playing a central role in the interaction of the ribosome with GTP-bound translation factors. The sequence is that of Large ribosomal subunit protein uL10 from Sulfurovum sp. (strain NBC37-1).